The sequence spans 1062 residues: Integrin alpha-8 (1062 aa).

Residues 1-35 (MSAGTHCGPPGNRAPPFARLCCVSAALGMLWSPAC) form the signal peptide. At 36–1010 (LAFNLDVDKL…ATPNVSFSIP (975 aa)) the chain is on the extracellular side. FG-GAP repeat units lie at residues 41 to 104 (DVDK…RSAQ), 121 to 182 (NGTK…AYAE), 187 to 239 (RNSN…IANY), 252 to 305 (KQTD…STDM), 306 to 371 (TFIQ…LLFQ), 372 to 430 (DPQV…GLHS), and 434 to 497 (QVLQ…LHPM). N-linked (GlcNAc...) asparagine glycosylation occurs at Asn80. Cysteines 95 and 105 form a disulfide. N-linked (GlcNAc...) asparagine glycosylation occurs at Asn121. An intrachain disulfide couples Cys149 to Cys170. Asn176 carries an N-linked (GlcNAc...) asparagine glycan. A disulfide bridge links Cys186 with Cys199. N-linked (GlcNAc...) asparagine glycosylation is present at Asn238. Positions 274, 276, 278, and 282 each coordinate Ca(2+). N-linked (GlcNAc...) asparagine glycans are attached at residues Asn301 and Asn310. Asp328, Asn330, Asp332, Asp336, Asp394, Asn396, Asp398, Tyr400, and Asp402 together coordinate Ca(2+). A Cell attachment site motif is present at residues 454–456 (RGD). Ca(2+) contacts are provided by Asp458, Asp460, Asn462, Tyr464, and Asp466. An N-linked (GlcNAc...) asparagine glycan is attached at Asn503. Intrachain disulfides connect Cys506/Cys517 and Cys523/Cys579. N-linked (GlcNAc...) asparagine glycans are attached at residues Asn600 and Asn604. Cystine bridges form between Cys640–Cys646 and Cys712–Cys725. 6 N-linked (GlcNAc...) asparagine glycosylation sites follow: Asn718, Asn736, Asn752, Asn779, Asn895, and Asn922. Intrachain disulfides connect Cys866–Cys923 and Cys928–Cys933. Asn1004 is a glycosylation site (N-linked (GlcNAc...) asparagine). A helical transmembrane segment spans residues 1011 to 1031 (LWVIILAILLGLLVLAILTLA). Residues 1032-1062 (LWKCGFFDRARPPQDEMTDREQLTSDKTPEA) lie on the Cytoplasmic side of the membrane.

The protein belongs to the integrin alpha chain family. In terms of assembly, heterodimer of an alpha and a beta subunit. The alpha subunit is composed of a heavy and a light chain linked by a disulfide bond. Alpha-8 associates with beta-1. In terms of tissue distribution, in brain, expressed in deep cortex, hippocampal CA1, basolateral amygdala and striatum. In kidney, expressed in glomerular mesengium (at protein level).

Its subcellular location is the membrane. The protein localises to the cell membrane. Its function is as follows. Integrin alpha-8/beta-1 functions in the genesis of kidney and probably of other organs by regulating the recruitment of mesenchymal cells into epithelial structures. It recognizes the sequence R-G-D in a wide array of ligands including TNC, FN1, SPP1 TGFB1, TGFB3 and VTN. NPNT is probably its functional ligand in kidney genesis. Neuronal receptor for TNC it mediates cell-cell interactions and regulates neurite outgrowth of sensory and motor neurons. In Mus musculus (Mouse), this protein is Integrin alpha-8 (Itga8).